Consider the following 182-residue polypeptide: NADH-ubiquinone oxidoreductase 20 kDa subunit (182 aa).

4 residues coordinate [4Fe-4S] cluster: Cys57, Cys58, Cys122, and Cys152.

This sequence belongs to the complex I 20 kDa subunit family. The cofactor is [4Fe-4S] cluster.

It localises to the mitochondrion. The catalysed reaction is a ubiquinone + NADH + 5 H(+)(in) = a ubiquinol + NAD(+) + 4 H(+)(out). The polypeptide is NADH-ubiquinone oxidoreductase 20 kDa subunit (NAD10) (Reclinomonas americana).